Here is a 562-residue protein sequence, read N- to C-terminus: Protein FAM222B (562 aa).

2 stretches are compositionally biased toward low complexity: residues 155 to 167 (QQAL…LAHA) and 183 to 201 (ALSH…HPQP). 3 disordered regions span residues 155–203 (QQAL…QPMA), 219–245 (LQHP…VTVS), and 537–562 (AHRA…PGYR).

This sequence belongs to the FAM222 family.

In Homo sapiens (Human), this protein is Protein FAM222B (FAM222B).